We begin with the raw amino-acid sequence, 675 residues long: Putative elongation factor TypA-like SVR3, chloroplastic (675 aa).

The transit peptide at 1 to 58 directs the protein to the chloroplast; sequence MELSLSTSSASPAVLRRQASPLLHKQQVLGVSFASALKPGGGALRFPSRRPLPRPITC. Residues 43–76 are disordered; sequence ALRFPSRRPLPRPITCSASPSTAEPASEVKKKQL. A compositionally biased stretch (low complexity) spans 59 to 68; the sequence is SASPSTAEPA. The 196-residue stretch at 80-275 folds into the tr-type G domain; the sequence is DNVRNIAIVA…AIIRCVPGPN (196 aa).

Belongs to the TRAFAC class translation factor GTPase superfamily. Classic translation factor GTPase family. BipA subfamily.

It is found in the plastid. It localises to the chloroplast. Its function is as follows. Putative chloroplastic elongation factor involved in response to chilling stress. Required for proper chloroplast rRNA processing and/or translation at low temperature. Involved in plastid protein homeostasis. The chain is Putative elongation factor TypA-like SVR3, chloroplastic (SVR3) from Arabidopsis thaliana (Mouse-ear cress).